The sequence spans 231 residues: Small ribosomal subunit protein uS3 (231 aa).

Residues 39–107 enclose the KH type-2 domain; the sequence is IRKFLKAKLY…DVTINIKEER (69 aa).

This sequence belongs to the universal ribosomal protein uS3 family. As to quaternary structure, part of the 30S ribosomal subunit. Forms a tight complex with proteins S10 and S14.

Functionally, binds the lower part of the 30S subunit head. Binds mRNA in the 70S ribosome, positioning it for translation. The polypeptide is Small ribosomal subunit protein uS3 (Campylobacter hominis (strain ATCC BAA-381 / DSM 21671 / CCUG 45161 / LMG 19568 / NCTC 13146 / CH001A)).